The sequence spans 493 residues: NADH-quinone oxidoreductase subunit N (493 aa).

14 helical membrane passes run 8–28 (ALLP…AIAI), 34–54 (LVFW…PHAS), 71–91 (GLFF…LCLA), 102–122 (EIFV…SSAH), 123–143 (LAMF…MIAY), 157–177 (YLML…MVYG), 200–220 (ALAG…LVPF), 232–252 (PTPV…ALLL), 266–286 (FLCV…LLAL), 294–314 (LLAY…VAAG), 325–345 (IAFY…AISA), 370–390 (AAVL…VGFV), 405–427 (WPLV…RVVL), and 443–463 (PAAG…GLFP). The interval 473 to 493 (VPQPPPTADSPQRLTATGGLP) is disordered.

The protein belongs to the complex I subunit 2 family. As to quaternary structure, NDH-1 is composed of 14 different subunits. Subunits NuoA, H, J, K, L, M, N constitute the membrane sector of the complex.

It localises to the cell inner membrane. It carries out the reaction a quinone + NADH + 5 H(+)(in) = a quinol + NAD(+) + 4 H(+)(out). In terms of biological role, NDH-1 shuttles electrons from NADH, via FMN and iron-sulfur (Fe-S) centers, to quinones in the respiratory chain. The immediate electron acceptor for the enzyme in this species is believed to be ubiquinone. Couples the redox reaction to proton translocation (for every two electrons transferred, four hydrogen ions are translocated across the cytoplasmic membrane), and thus conserves the redox energy in a proton gradient. This is NADH-quinone oxidoreductase subunit N from Methylococcus capsulatus (strain ATCC 33009 / NCIMB 11132 / Bath).